A 226-amino-acid polypeptide reads, in one-letter code: X-linked lymphocyte-regulated protein 3C (226 aa).

The tract at residues 1 to 66 (MSSRKRKATD…QARKEKQDLV (66 aa)) is disordered. Over residues 8 to 18 (ATDTAGRHSRM) the composition is skewed to basic and acidic residues. Positions 21 to 30 (NLSSDDSQNP) are enriched in polar residues. 2 stretches are compositionally biased toward basic and acidic residues: residues 39 to 48 (EVLDAGREDI) and 56 to 66 (QQARKEKQDLV). Residues 155–210 (ESLTLQKNRMEEFKSLCEKYLEKLEVLRDSRGNSIAEELRRLIATLEIKLLMLHNQ) are a coiled coil.

This sequence belongs to the XLR/SYCP3 family. As to expression, expressed in lymphoid cells.

This is X-linked lymphocyte-regulated protein 3C (Xlr3c) from Mus musculus (Mouse).